A 374-amino-acid polypeptide reads, in one-letter code: tRNA-specific 2-thiouridylase MnmA (374 aa).

ATP is bound by residues 17-24 and Met-43; that span reads GMSGGVDS. The tract at residues 103 to 105 is interaction with target base in tRNA; sequence NPD. Cys-108 (nucleophile) is an active-site residue. A disulfide bridge connects residues Cys-108 and Cys-204. Gly-132 is an ATP binding site. Residues 154–156 are interaction with tRNA; sequence KDQ. Residue Cys-204 is the Cysteine persulfide intermediate of the active site. The tract at residues 316 to 317 is interaction with tRNA; that stretch reads RY.

Belongs to the MnmA/TRMU family.

It localises to the cytoplasm. The catalysed reaction is S-sulfanyl-L-cysteinyl-[protein] + uridine(34) in tRNA + AH2 + ATP = 2-thiouridine(34) in tRNA + L-cysteinyl-[protein] + A + AMP + diphosphate + H(+). Its function is as follows. Catalyzes the 2-thiolation of uridine at the wobble position (U34) of tRNA, leading to the formation of s(2)U34. The sequence is that of tRNA-specific 2-thiouridylase MnmA from Pseudomonas putida (strain W619).